A 431-amino-acid chain; its full sequence is Glucose-1-phosphate adenylyltransferase (431 aa).

Alpha-D-glucose 1-phosphate is bound by residues Gly163, 178 to 179, and Ser210; that span reads EK.

The protein belongs to the bacterial/plant glucose-1-phosphate adenylyltransferase family. In terms of assembly, homotetramer.

The enzyme catalyses alpha-D-glucose 1-phosphate + ATP + H(+) = ADP-alpha-D-glucose + diphosphate. The protein operates within glycan biosynthesis; glycogen biosynthesis. Functionally, involved in the biosynthesis of ADP-glucose, a building block required for the elongation reactions to produce glycogen. Catalyzes the reaction between ATP and alpha-D-glucose 1-phosphate (G1P) to produce pyrophosphate and ADP-Glc. The sequence is that of Glucose-1-phosphate adenylyltransferase from Synechococcus sp. (strain WH7803).